A 798-amino-acid polypeptide reads, in one-letter code: Probable serine/threonine-protein kinase DDB_G0276461 (798 aa).

In terms of domain architecture, Protein kinase spans 54–324 (VTEVKLVAEG…DLLNYLNEIR (271 aa)). Residues 60–68 (VAEGGFGFV) and lysine 82 each bind ATP. The active-site Proton acceptor is the aspartate 185. 3 disordered regions span residues 330–538 (GLQT…NGNF), 553–645 (TNGS…SYNN), and 659–798 (SSAS…FGIL). Composition is skewed to low complexity over residues 335 to 406 (SSNN…NTPN), 429 to 490 (SNSN…NNNN), 506 to 538 (PSPS…NGNF), 557 to 603 (TNFE…INNS), 611 to 642 (SSGS…NSGS), and 659 to 678 (SSAS…NSWN). Residues 679-697 (VTLTPSQSNKNSTGNLKPL) are compositionally biased toward polar residues. Residues 698–716 (NNNNNNNNNNNNRFANNTN) show a composition bias toward low complexity. The segment covering 717–769 (SSRDYSFDFSSPNTSNNNDFGSFVQPSSSSSLNTTHFSKPNYNVNLNQTTSMT) has biased composition (polar residues). Residues 770–790 (NNYNNNNYNNNNNSNNNNNNS) are compositionally biased toward low complexity.

The protein belongs to the protein kinase superfamily. Ser/Thr protein kinase family.

It carries out the reaction L-seryl-[protein] + ATP = O-phospho-L-seryl-[protein] + ADP + H(+). The catalysed reaction is L-threonyl-[protein] + ATP = O-phospho-L-threonyl-[protein] + ADP + H(+). This is Probable serine/threonine-protein kinase DDB_G0276461 from Dictyostelium discoideum (Social amoeba).